The primary structure comprises 372 residues: Mitogen-activated protein kinase homolog NTF3 (372 aa).

Positions 32–319 constitute a Protein kinase domain; sequence YVPIKPIGRG…VIEALQHPYM (288 aa). ATP-binding positions include 38 to 46 and K61; that span reads IGRGAYGIV. D158 serves as the catalytic Proton acceptor. Residue T191 is modified to Phosphothreonine. The short motif at 191-193 is the TXY element; sequence TEY. Position 193 is a phosphotyrosine (Y193).

Belongs to the protein kinase superfamily. CMGC Ser/Thr protein kinase family. MAP kinase subfamily. Mg(2+) serves as cofactor. Post-translationally, dually phosphorylated on Thr-191 and Tyr-193, which activates the enzyme. Very low autophosphorylation, although dramatically increased when Mn(2+) is added to the reaction instead of Mg(2+). As to expression, ubiquitous.

The enzyme catalyses L-seryl-[protein] + ATP = O-phospho-L-seryl-[protein] + ADP + H(+). The catalysed reaction is L-threonyl-[protein] + ATP = O-phospho-L-threonyl-[protein] + ADP + H(+). Activated by tyrosine and threonine phosphorylation. This Nicotiana tabacum (Common tobacco) protein is Mitogen-activated protein kinase homolog NTF3 (NTF3).